Reading from the N-terminus, the 249-residue chain is 3-deoxy-D-manno-octulosonic acid kinase (249 aa).

Aspartate 175 is a catalytic residue.

It belongs to the protein kinase superfamily. KdkA/RfaP family.

It is found in the cell inner membrane. The enzyme catalyses an alpha-Kdo-(2-&gt;6)-lipid IVA + ATP = a 4-O-phospho-alpha-Kdo-(2-&gt;6)-lipid IVA + ADP + H(+). The protein operates within bacterial outer membrane biogenesis; LPS core biosynthesis. Functionally, catalyzes the ATP-dependent phosphorylation of the 3-deoxy-D-manno-octulosonic acid (Kdo) residue in Kdo-lipid IV(A) at the 4-OH position. In Stenotrophomonas maltophilia (strain K279a), this protein is 3-deoxy-D-manno-octulosonic acid kinase.